The sequence spans 471 residues: ATP synthase subunit beta (471 aa).

153 to 160 (GGAGVGKT) is an ATP binding site.

The protein belongs to the ATPase alpha/beta chains family. In terms of assembly, F-type ATPases have 2 components, CF(1) - the catalytic core - and CF(0) - the membrane proton channel. CF(1) has five subunits: alpha(3), beta(3), gamma(1), delta(1), epsilon(1). CF(0) has three main subunits: a(1), b(2) and c(9-12). The alpha and beta chains form an alternating ring which encloses part of the gamma chain. CF(1) is attached to CF(0) by a central stalk formed by the gamma and epsilon chains, while a peripheral stalk is formed by the delta and b chains.

It is found in the cell inner membrane. It carries out the reaction ATP + H2O + 4 H(+)(in) = ADP + phosphate + 5 H(+)(out). In terms of biological role, produces ATP from ADP in the presence of a proton gradient across the membrane. The catalytic sites are hosted primarily by the beta subunits. The sequence is that of ATP synthase subunit beta from Verminephrobacter eiseniae (strain EF01-2).